The sequence spans 505 residues: Forkhead box protein O4 (505 aa).

Disordered regions lie at residues 1-66, 175-244, and 257-276; these read MDPE…HSEP, SSWW…SPCP, and RPRS…PMRP. Thr-32 carries the phosphothreonine; by PKB/AKT1 modification. Positions 97 to 215 are required for interaction with FOXK1; it reads RRNAWGNQSY…RGRSKGPKKK (119 aa). Positions 100–188 form a DNA-binding region, fork-head; sequence AWGNQSYAEL…MLNPDGGKGG (89 aa). Phosphoserine; by PKB/AKT1 is present on Ser-197. Over residues 205–216 the composition is skewed to basic residues; it reads LRGRSKGPKKKP. Positions 257-271 are enriched in polar residues; that stretch reads RPRSSSNASTVSTRL. At Ser-262 the chain carries Phosphoserine; by PKB/AKT1.

Interacts with CREBBP/CBP, MYOCD, SIRT1, SRF and YWHAZ. Acetylated by CREBBP/CBP and deacetylated by SIRT1. Binding of YWHAZ inhibits DNA-binding. Interacts with USP7; the interaction is enhanced in presence of hydrogen peroxide and occurs independently of TP53. Interacts with NLK, and this inhibits monoubiquitination and transcriptional activity. Interacts with FOXK1; the interaction inhibits MEF2C transactivation activity. Post-translationally, acetylation by CREBBP/CBP is induced by oxidative stress and inhibits transcriptional activity. Deacetylation by SIRT1 is NAD-dependent and stimulates transcriptional activity. Phosphorylation by PKB/AKT1 inhibits transcriptional activity and is responsible for cytoplasmic localization. May be phosphorylated at multiple sites by NLK. In terms of processing, monoubiquitinated; monoubiquitination is induced by oxidative stress and reduced by deacetylase inhibitors; results in its relocalization to the nucleus and its increased transcriptional activity. Deubiquitinated by USP7; deubiquitination is induced by oxidative stress; enhances its interaction with USP7 and consequently, deubiquitination; increases its translocation to the cytoplasm and inhibits its transcriptional activity. Hydrogene-peroxide-induced ubiquitination and USP7-mediated deubiquitination have no major effect on its protein stability. Strongly expressed in brown adipose tissue and weakly in white adipose tissue (at protein level). Expressed in skeletal muscle.

The protein resides in the cytoplasm. It is found in the nucleus. Its function is as follows. Transcription factor involved in the regulation of the insulin signaling pathway. Binds to insulin-response elements (IREs) and can activate transcription of IGFBP1. Down-regulates expression of HIF1A and suppresses hypoxia-induced transcriptional activation of HIF1A-modulated genes. Also involved in negative regulation of the cell cycle. Involved in increased proteasome activity in embryonic stem cells (ESCs) by activating expression of PSMD11 in ESCs, leading to enhanced assembly of the 26S proteasome, followed by higher proteasome activity. Represses smooth muscle cell differentiation by inhibiting the transcriptional coactivator activity of myocardin. The protein is Forkhead box protein O4 (Foxo4) of Mus musculus (Mouse).